The primary structure comprises 91 residues: Non-specific lipid-transfer protein P3 (91 aa).

4 cysteine pairs are disulfide-bonded: cysteine 3–cysteine 50, cysteine 13–cysteine 27, cysteine 28–cysteine 73, and cysteine 48–cysteine 87.

The protein localises to the secreted. Functionally, plant non-specific lipid-transfer proteins transfer phospholipids as well as galactolipids across membranes. May play a role in wax or cutin deposition in the cell walls of expanding epidermal cells and certain secretory tissues. In Vitis sp. (Grape), this protein is Non-specific lipid-transfer protein P3.